A 431-amino-acid chain; its full sequence is tRNA(Ile)-lysidine synthase (431 aa).

ATP is bound at residue 20–25 (SGGLDS).

This sequence belongs to the tRNA(Ile)-lysidine synthase family.

It is found in the cytoplasm. The enzyme catalyses cytidine(34) in tRNA(Ile2) + L-lysine + ATP = lysidine(34) in tRNA(Ile2) + AMP + diphosphate + H(+). Functionally, ligates lysine onto the cytidine present at position 34 of the AUA codon-specific tRNA(Ile) that contains the anticodon CAU, in an ATP-dependent manner. Cytidine is converted to lysidine, thus changing the amino acid specificity of the tRNA from methionine to isoleucine. The polypeptide is tRNA(Ile)-lysidine synthase (Escherichia coli O157:H7).